A 475-amino-acid polypeptide reads, in one-letter code: MSPKTETKASVGFKAGVKDYRLTYYTPEYQTKDTDILAAFRVTPQPGVPPEEAGAAVAAESSTGTWTTVWTDGLTSLDRYKGRCYDIEPVPGEESQFIAYVAYPLDLFEEGSVTNLFTSIVGNVFGFKALRALRLEDLRIPPSYSKTFQGPPHGIQVERDKLNKYGRPLLGCTIKPKLGLSAKNYGRAVYECLRGGLDFTKDDENVNSQPFMRWRDRFVFCAEAINKAQAETGEIKGHYLNATAGTCEEMIKRAVFARELGVPIVMHDYLTGGFTANTSLAHYCRDNGLLLHIHRAMHAVIDRQRNHGMHFRVLAKALRMSGGDHIHAGTVVGKLEGERDVTLGFVDLLRDDFIEKDRSRGIYFTQDWVSMPGVMPVASGGIHVWHMPALTEIFGDDSVLQFGGGTLGHPWGNAPGAVANRVALEACVQARNEGRDLAREGNEVIREAAKWSAELAAACEIWKEIKFEFDAIDRL.

Positions 1–2 (MS) are excised as a propeptide. Residue Pro3 is modified to N-acetylproline. N6,N6,N6-trimethyllysine is present on Lys14. Substrate is bound by residues Asn123 and Thr173. Lys175 (proton acceptor) is an active-site residue. Substrate is bound at residue Lys177. Mg(2+) contacts are provided by Lys201, Asp203, and Glu204. Position 201 is an N6-carboxylysine (Lys201). His294 acts as the Proton acceptor in catalysis. Residues Arg295, His327, and Ser379 each coordinate substrate.

The protein belongs to the RuBisCO large chain family. Type I subfamily. Heterohexadecamer of 8 large chains and 8 small chains; disulfide-linked. The disulfide link is formed within the large subunit homodimers. Mg(2+) serves as cofactor. Post-translationally, the disulfide bond which can form in the large chain dimeric partners within the hexadecamer appears to be associated with oxidative stress and protein turnover.

The protein localises to the plastid. The protein resides in the chloroplast. The enzyme catalyses 2 (2R)-3-phosphoglycerate + 2 H(+) = D-ribulose 1,5-bisphosphate + CO2 + H2O. The catalysed reaction is D-ribulose 1,5-bisphosphate + O2 = 2-phosphoglycolate + (2R)-3-phosphoglycerate + 2 H(+). In terms of biological role, ruBisCO catalyzes two reactions: the carboxylation of D-ribulose 1,5-bisphosphate, the primary event in carbon dioxide fixation, as well as the oxidative fragmentation of the pentose substrate in the photorespiration process. Both reactions occur simultaneously and in competition at the same active site. The protein is Ribulose bisphosphate carboxylase large chain of Pinus krempfii (Krempf's pine).